The following is a 275-amino-acid chain: Ribosomal RNA small subunit methyltransferase A (275 aa).

The S-adenosyl-L-methionine site is built by Asn-27, Leu-29, Gly-54, Glu-76, Asp-102, and Asn-123.

It belongs to the class I-like SAM-binding methyltransferase superfamily. rRNA adenine N(6)-methyltransferase family. RsmA subfamily.

Its subcellular location is the cytoplasm. It catalyses the reaction adenosine(1518)/adenosine(1519) in 16S rRNA + 4 S-adenosyl-L-methionine = N(6)-dimethyladenosine(1518)/N(6)-dimethyladenosine(1519) in 16S rRNA + 4 S-adenosyl-L-homocysteine + 4 H(+). Its function is as follows. Specifically dimethylates two adjacent adenosines (A1518 and A1519) in the loop of a conserved hairpin near the 3'-end of 16S rRNA in the 30S particle. May play a critical role in biogenesis of 30S subunits. The chain is Ribosomal RNA small subunit methyltransferase A from Chelativorans sp. (strain BNC1).